The chain runs to 251 residues: uncharacterized protein (251 aa).

Residue V14–V37 coordinates NADP(+). A substrate-binding site is contributed by S145. Y158 acts as the Proton acceptor in catalysis.

It belongs to the short-chain dehydrogenases/reductases (SDR) family.

Its function is as follows. May be involved in the biosynthesis of a heptaene-type antibiotic. This is an uncharacterized protein from Streptomyces coelicolor.